The primary structure comprises 360 residues: Type II methyltransferase M2.ScrFI (360 aa).

The SAM-dependent MTase C5-type domain maps to 2-360 (LRVFEAFAGY…SLFKELFKSQ (359 aa)). Residue Cys-127 is part of the active site.

It belongs to the class I-like SAM-binding methyltransferase superfamily. C5-methyltransferase family.

It catalyses the reaction a 2'-deoxycytidine in DNA + S-adenosyl-L-methionine = a 5-methyl-2'-deoxycytidine in DNA + S-adenosyl-L-homocysteine + H(+). Its function is as follows. A methylase, recognizes the double-stranded sequence 5'-CCNGG-3', methylates C-2 on both strands, and protects the DNA from cleavage by the ScrFI endonuclease. In Lactococcus lactis subsp. cremoris (Streptococcus cremoris), this protein is Type II methyltransferase M2.ScrFI (scrFIBM).